The following is a 378-amino-acid chain: N-acetyldiaminopimelate deacetylase (378 aa).

Asp65 is a catalytic residue. Glu124 functions as the Proton acceptor in the catalytic mechanism.

The protein belongs to the peptidase M20A family. N-acetyldiaminopimelate deacetylase subfamily.

The catalysed reaction is N-acetyl-(2S,6S)-2,6-diaminopimelate + H2O = (2S,6S)-2,6-diaminopimelate + acetate. It participates in amino-acid biosynthesis; L-lysine biosynthesis via DAP pathway; LL-2,6-diaminopimelate from (S)-tetrahydrodipicolinate (acetylase route): step 3/3. In terms of biological role, catalyzes the conversion of N-acetyl-diaminopimelate to diaminopimelate and acetate. This Anoxybacillus flavithermus (strain DSM 21510 / WK1) protein is N-acetyldiaminopimelate deacetylase.